A 90-amino-acid chain; its full sequence is HssA/B-like protein 4 (90 aa).

The protein belongs to the hssA/B family.

The chain is HssA/B-like protein 4 (hssl4) from Dictyostelium discoideum (Social amoeba).